A 119-amino-acid polypeptide reads, in one-letter code: Large ribosomal subunit protein uL18 (119 aa).

The segment at 1–26 is disordered; it reads MGQNDKAARRQKIKLRSKTRGQGTAA. Residues 9-19 are compositionally biased toward basic residues; sequence RRQKIKLRSKT.

Belongs to the universal ribosomal protein uL18 family. Part of the 50S ribosomal subunit; part of the 5S rRNA/L5/L18/L25 subcomplex. Contacts the 5S and 23S rRNAs.

Functionally, this is one of the proteins that bind and probably mediate the attachment of the 5S RNA into the large ribosomal subunit, where it forms part of the central protuberance. The sequence is that of Large ribosomal subunit protein uL18 from Prosthecochloris aestuarii (strain DSM 271 / SK 413).